The chain runs to 61 residues: Large ribosomal subunit protein eL29y (61 aa).

Residues 1-61 (MAKSKNHTAH…KSGENAGVEE (61 aa)) form a disordered region. Positions 15–31 (KAHKNGIKKPRRHRHTP) are enriched in basic residues.

The protein belongs to the eukaryotic ribosomal protein eL29 family.

This Arabidopsis thaliana (Mouse-ear cress) protein is Large ribosomal subunit protein eL29y (RPL29B).